Consider the following 397-residue polypeptide: Pentatricopeptide repeat-containing protein At1g80150, mitochondrial (397 aa).

Residues 1-81 (MLSLRHIRRF…FAFEDTVSRL (81 aa)) constitute a mitochondrion transit peptide. PPR repeat units lie at residues 105–139 (REGFIVRIIMLYGKAGMTKQALDTFFNMDLYGCKR), 140–170 (SVKSFNAALQVLSFNPDLHTIWEFLHDAPSK), 176–210 (DAVSFNIAIKSFCELGILDGAYMAMREMEKSGLTP), 211–245 (DVVTYTTLISALYKHERCVIGNGLWNLMVLKGCKP), 246–280 (NLTTFNVRIQFLVNRRRAWDANDLLLLMPKLQVEP), 281–315 (DSITYNMVIKGFFLARFPDMAERVYTAMHGKGYKP), 316–350 (NLKIYQTMIHYLCKAGNFDLAYTMCKDCMRKKWYP), and 351–381 (NLDTVEMLLKGLVKKGQLDQAKSIMELVHRR).

It belongs to the PPR family. P subfamily.

The protein resides in the mitochondrion. This chain is Pentatricopeptide repeat-containing protein At1g80150, mitochondrial, found in Arabidopsis thaliana (Mouse-ear cress).